Reading from the N-terminus, the 230-residue chain is Ribose-5-phosphate isomerase A (230 aa).

Substrate is bound by residues 29–32 (TGST), 85–88 (DGAD), and 99–102 (KGAG). Residue Glu-108 is the Proton acceptor of the active site. Residue Lys-126 coordinates substrate.

Belongs to the ribose 5-phosphate isomerase family. As to quaternary structure, homodimer.

The enzyme catalyses aldehydo-D-ribose 5-phosphate = D-ribulose 5-phosphate. Its pathway is carbohydrate degradation; pentose phosphate pathway; D-ribose 5-phosphate from D-ribulose 5-phosphate (non-oxidative stage): step 1/1. In terms of biological role, catalyzes the reversible conversion of ribose-5-phosphate to ribulose 5-phosphate. In Synechococcus sp. (strain JA-3-3Ab) (Cyanobacteria bacterium Yellowstone A-Prime), this protein is Ribose-5-phosphate isomerase A.